Consider the following 768-residue polypeptide: Phosphoribosylformylglycinamidine synthase subunit PurL (768 aa).

The active site involves His44. ATP contacts are provided by Tyr47 and Lys86. Glu88 lines the Mg(2+) pocket. Residues 89-92 (SHNH) and Arg111 contribute to the substrate site. His90 functions as the Proton acceptor in the catalytic mechanism. A Mg(2+)-binding site is contributed by Asp112. Gln235 provides a ligand contact to substrate. Asp263 provides a ligand contact to Mg(2+). 307-309 (ESQ) contributes to the substrate binding site. Residues Asp518 and Gly555 each contribute to the ATP site. A Mg(2+)-binding site is contributed by Asn556. Ser558 contributes to the substrate binding site.

It belongs to the FGAMS family. In terms of assembly, monomer. Part of the FGAM synthase complex composed of 1 PurL, 1 PurQ and 2 PurS subunits.

The protein resides in the cytoplasm. It catalyses the reaction N(2)-formyl-N(1)-(5-phospho-beta-D-ribosyl)glycinamide + L-glutamine + ATP + H2O = 2-formamido-N(1)-(5-O-phospho-beta-D-ribosyl)acetamidine + L-glutamate + ADP + phosphate + H(+). It participates in purine metabolism; IMP biosynthesis via de novo pathway; 5-amino-1-(5-phospho-D-ribosyl)imidazole from N(2)-formyl-N(1)-(5-phospho-D-ribosyl)glycinamide: step 1/2. Functionally, part of the phosphoribosylformylglycinamidine synthase complex involved in the purines biosynthetic pathway. Catalyzes the ATP-dependent conversion of formylglycinamide ribonucleotide (FGAR) and glutamine to yield formylglycinamidine ribonucleotide (FGAM) and glutamate. The FGAM synthase complex is composed of three subunits. PurQ produces an ammonia molecule by converting glutamine to glutamate. PurL transfers the ammonia molecule to FGAR to form FGAM in an ATP-dependent manner. PurS interacts with PurQ and PurL and is thought to assist in the transfer of the ammonia molecule from PurQ to PurL. The protein is Phosphoribosylformylglycinamidine synthase subunit PurL of Synechococcus sp. (strain JA-2-3B'a(2-13)) (Cyanobacteria bacterium Yellowstone B-Prime).